The primary structure comprises 190 residues: Class III hydrophobin F (190 aa).

The first 18 residues, 1–18, serve as a signal peptide directing secretion; that stretch reads MRPITILCTLATLSTTLA. Cystine bridges form between C54–C115, C62–C109, C63–C97, and C116–C131.

This sequence belongs to the fungal hydrophobin family. In terms of assembly, self-assembles to form functional amyloid fibrils called rodlets. Self-assembly into fibrillar rodlets occurs spontaneously at hydrophobic:hydrophilic interfaces and the rodlets further associate laterally to form amphipathic monolayers.

The protein localises to the secreted. The protein resides in the cell wall. Aerial growth, conidiation, and dispersal of filamentous fungi in the environment rely upon a capability of their secreting small amphipathic proteins called hydrophobins (HPBs) with low sequence identity. Class I can self-assemble into an outermost layer of rodlet bundles on aerial cell surfaces, conferring cellular hydrophobicity that supports fungal growth, development and dispersal; whereas Class II form highly ordered films at water-air interfaces through intermolecular interactions but contribute nothing to the rodlet structure. RodF and rodG belong to Class III, which contains hydrophobins with intermediate (between classes I and II) or atypical characteristics. RodF, unlike rodA, is not required for rodlet formation. The protein is Class III hydrophobin F of Aspergillus fumigatus (strain ATCC MYA-4609 / CBS 101355 / FGSC A1100 / Af293) (Neosartorya fumigata).